Reading from the N-terminus, the 384-residue chain is BTB and MATH domain-containing protein 34 (384 aa).

Residues 41–127 (LNGNTTLKRI…ELKFQKEQLK (87 aa)) adopt a coiled-coil conformation. In terms of domain architecture, MATH spans 167 to 277 (EFSHTFNSVA…VFNFGEYEEI (111 aa)). Positions 317 to 380 (SDAVMIVKDE…LYGEPALTGR (64 aa)) constitute a BTB domain.

This Caenorhabditis elegans protein is BTB and MATH domain-containing protein 34 (bath-34).